Consider the following 225-residue polypeptide: Orotidine 5'-phosphate decarboxylase (225 aa).

Substrate-binding positions include Asp9, Lys31, 58-67, Thr115, Arg176, Gln184, Gly204, and Arg205; that span reads DLKLHDIPNT. The active-site Proton donor is Lys60.

The protein belongs to the OMP decarboxylase family. Type 1 subfamily. Homodimer.

The enzyme catalyses orotidine 5'-phosphate + H(+) = UMP + CO2. Its pathway is pyrimidine metabolism; UMP biosynthesis via de novo pathway; UMP from orotate: step 2/2. Functionally, catalyzes the decarboxylation of orotidine 5'-monophosphate (OMP) to uridine 5'-monophosphate (UMP). This Wolbachia sp. subsp. Brugia malayi (strain TRS) protein is Orotidine 5'-phosphate decarboxylase.